The sequence spans 210 residues: Prolactin-2 (210 aa).

A signal peptide spans 1-23 (MARRSQGTKLHLAVLCLVVSCHA). 2 cysteine pairs are disulfide-bonded: C69-C183 and C200-C210.

The protein belongs to the somatotropin/prolactin family.

It is found in the secreted. This is Prolactin-2 (prl2) from Oncorhynchus keta (Chum salmon).